Consider the following 329-residue polypeptide: Neuropeptides B/W receptor type 1 (329 aa).

The Extracellular portion of the chain corresponds to Met-1–Ala-39. Asn-3, Asn-13, and Asn-25 each carry an N-linked (GlcNAc...) asparagine glycan. A helical membrane pass occupies residues Val-40–Val-63. The Cytoplasmic portion of the chain corresponds to Leu-64 to Thr-74. Residues Asn-75–Phe-99 traverse the membrane as a helical segment. At Leu-100 to Ile-114 the chain is on the extracellular side. A disulfide bridge connects residues Cys-111 and Cys-190. A helical membrane pass occupies residues Val-115–Ala-134. The Cytoplasmic portion of the chain corresponds to Asp-135 to Ala-159. The chain crosses the membrane as a helical span at residues Val-160–Ala-179. At Arg-180–Ala-204 the chain is on the extracellular side. Residues Ser-205 to Ile-226 traverse the membrane as a helical segment. The Cytoplasmic portion of the chain corresponds to Thr-227–Arg-250. The chain crosses the membrane as a helical span at residues Val-251–Val-275. The Extracellular portion of the chain corresponds to Ala-276–Pro-285. Residues Leu-286–Ala-300 traverse the membrane as a helical segment. Over Asn-301–Ala-329 the chain is Cytoplasmic.

Belongs to the G-protein coupled receptor 1 family.

It localises to the cell membrane. In terms of biological role, interacts specifically with a number of opioid ligands. Receptor for neuropeptides B and W, which may be involved in neuroendocrine system regulation, food intake and the organization of other signals. The chain is Neuropeptides B/W receptor type 1 (Npbwr1) from Rattus norvegicus (Rat).